The chain runs to 643 residues: Probable extracellular metalloproteinase 4 (643 aa).

Positions 1–18 (MHGLLLAGLLALPLNVFA) are cleaved as a signal peptide. A propeptide spanning residues 19-254 (HPTESHSSGV…VHSVVDYVSA (236 aa)) is cleaved from the precursor. The segment at 49-69 (SDAVPKQDGESFTTSSTGDDN) is disordered. A compositionally biased stretch (polar residues) spans 58–69 (ESFTTSSTGDDN). N-linked (GlcNAc...) asparagine glycans are attached at residues asparagine 271 and asparagine 420. Residue histidine 437 participates in Zn(2+) binding. The active site involves glutamate 438. Zn(2+) is bound at residue histidine 441. N-linked (GlcNAc...) asparagine glycans are attached at residues asparagine 603 and asparagine 629.

It belongs to the peptidase M36 family. Requires Zn(2+) as cofactor.

It localises to the secreted. In terms of biological role, secreted metalloproteinase probably acting as a virulence factor. This Trichophyton verrucosum (strain HKI 0517) protein is Probable extracellular metalloproteinase 4 (MEP4).